The chain runs to 373 residues: ATP phosphoribosyltransferase regulatory subunit (373 aa).

Belongs to the class-II aminoacyl-tRNA synthetase family. HisZ subfamily. As to quaternary structure, heteromultimer composed of HisG and HisZ subunits.

The protein localises to the cytoplasm. It functions in the pathway amino-acid biosynthesis; L-histidine biosynthesis; L-histidine from 5-phospho-alpha-D-ribose 1-diphosphate: step 1/9. Functionally, required for the first step of histidine biosynthesis. May allow the feedback regulation of ATP phosphoribosyltransferase activity by histidine. The sequence is that of ATP phosphoribosyltransferase regulatory subunit from Chelativorans sp. (strain BNC1).